The sequence spans 416 residues: Phosphoribosylamine--glycine ligase (416 aa).

The region spanning 107 to 313 (KDFMKKYNVK…FVDLINAAMD (207 aa)) is the ATP-grasp domain. Position 133 to 194 (133 to 194 (LKKCTYPIVI…EEYLEGVEAS (62 aa))) interacts with ATP. Mg(2+) contacts are provided by E283 and N285.

This sequence belongs to the GARS family. It depends on Mg(2+) as a cofactor. Mn(2+) is required as a cofactor.

It carries out the reaction 5-phospho-beta-D-ribosylamine + glycine + ATP = N(1)-(5-phospho-beta-D-ribosyl)glycinamide + ADP + phosphate + H(+). Its pathway is purine metabolism; IMP biosynthesis via de novo pathway; N(1)-(5-phospho-D-ribosyl)glycinamide from 5-phospho-alpha-D-ribose 1-diphosphate: step 2/2. This is Phosphoribosylamine--glycine ligase from Clostridium acetobutylicum (strain ATCC 824 / DSM 792 / JCM 1419 / IAM 19013 / LMG 5710 / NBRC 13948 / NRRL B-527 / VKM B-1787 / 2291 / W).